Reading from the N-terminus, the 571-residue chain is Urease subunit alpha (571 aa).

The 440-residue stretch at 132-571 (GGIDSHIHFI…LPMAQRYFLF (440 aa)) folds into the Urease domain. Histidine 137, histidine 139, and lysine 220 together coordinate Ni(2+). Lysine 220 is subject to N6-carboxylysine. Histidine 222 lines the substrate pocket. 2 residues coordinate Ni(2+): histidine 249 and histidine 275. The active-site Proton donor is the histidine 323. Aspartate 363 contacts Ni(2+).

This sequence belongs to the metallo-dependent hydrolases superfamily. Urease alpha subunit family. As to quaternary structure, heterotrimer of UreA (gamma), UreB (beta) and UreC (alpha) subunits. Three heterotrimers associate to form the active enzyme. Ni cation serves as cofactor. Carboxylation allows a single lysine to coordinate two nickel ions.

It localises to the cytoplasm. It catalyses the reaction urea + 2 H2O + H(+) = hydrogencarbonate + 2 NH4(+). The protein operates within nitrogen metabolism; urea degradation; CO(2) and NH(3) from urea (urease route): step 1/1. This Kocuria rhizophila (strain ATCC 9341 / DSM 348 / NBRC 103217 / DC2201) protein is Urease subunit alpha.